A 163-amino-acid polypeptide reads, in one-letter code: Transcription elongation factor GreA (163 aa).

A coiled-coil region spans residues 11–38; sequence FKQLEKELDRLKKERPGVIQAIKEAREE.

This sequence belongs to the GreA/GreB family.

Necessary for efficient RNA polymerase transcription elongation past template-encoded arresting sites. The arresting sites in DNA have the property of trapping a certain fraction of elongating RNA polymerases that pass through, resulting in locked ternary complexes. Cleavage of the nascent transcript by cleavage factors such as GreA or GreB allows the resumption of elongation from the new 3'terminus. GreA releases sequences of 2 to 3 nucleotides. The protein is Transcription elongation factor GreA of Nitratidesulfovibrio vulgaris (strain ATCC 29579 / DSM 644 / CCUG 34227 / NCIMB 8303 / VKM B-1760 / Hildenborough) (Desulfovibrio vulgaris).